The following is a 376-amino-acid chain: Cytoplasmic tRNA 2-thiolation protein 1 (376 aa).

Belongs to the TtcA family. CTU1/NCS6/ATPBD3 subfamily.

It localises to the cytoplasm. It functions in the pathway tRNA modification; 5-methoxycarbonylmethyl-2-thiouridine-tRNA biosynthesis. Plays a central role in 2-thiolation of mcm(5)S(2)U at tRNA wobble positions of tRNA(Lys), tRNA(Glu) and tRNA(Gln). Directly binds tRNAs and probably acts by catalyzing adenylation of tRNAs, an intermediate required for 2-thiolation. It is unclear whether it acts as a sulfurtransferase that transfers sulfur from thiocarboxylated URM1 onto the uridine of tRNAs at wobble position. Prior mcm(5) tRNA modification by the elongator complex is required for 2-thiolation. May also be involved in protein urmylation. The sequence is that of Cytoplasmic tRNA 2-thiolation protein 1 from Scheffersomyces stipitis (strain ATCC 58785 / CBS 6054 / NBRC 10063 / NRRL Y-11545) (Yeast).